A 212-amino-acid chain; its full sequence is Large ribosomal subunit protein bL25 (212 aa).

Positions 181–212 (LSEPKEEVIEEDVEEVSADVPTVSETEEEDAE) are disordered. Positions 188–197 (VIEEDVEEVS) are enriched in acidic residues.

It belongs to the bacterial ribosomal protein bL25 family. CTC subfamily. Part of the 50S ribosomal subunit; part of the 5S rRNA/L5/L18/L25 subcomplex. Contacts the 5S rRNA. Binds to the 5S rRNA independently of L5 and L18.

This is one of the proteins that binds to the 5S RNA in the ribosome where it forms part of the central protuberance. This is Large ribosomal subunit protein bL25 from Finegoldia magna (strain ATCC 29328 / DSM 20472 / WAL 2508) (Peptostreptococcus magnus).